The primary structure comprises 249 residues: tRNA (guanine-N(1)-)-methyltransferase (249 aa).

S-adenosyl-L-methionine is bound by residues Gly-113 and 133–138 (IGDYVL).

Belongs to the RNA methyltransferase TrmD family. As to quaternary structure, homodimer.

The protein resides in the cytoplasm. It catalyses the reaction guanosine(37) in tRNA + S-adenosyl-L-methionine = N(1)-methylguanosine(37) in tRNA + S-adenosyl-L-homocysteine + H(+). Its function is as follows. Specifically methylates guanosine-37 in various tRNAs. This is tRNA (guanine-N(1)-)-methyltransferase from Aeromonas hydrophila subsp. hydrophila (strain ATCC 7966 / DSM 30187 / BCRC 13018 / CCUG 14551 / JCM 1027 / KCTC 2358 / NCIMB 9240 / NCTC 8049).